The following is a 53-amino-acid chain: Dihydrolipoyl dehydrogenase (53 aa).

FAD is bound by residues 35–44 (EKYPTFGGTC) and K53. C44 and C49 form a disulfide bridge.

This sequence belongs to the class-I pyridine nucleotide-disulfide oxidoreductase family. Homodimer. Requires FAD as cofactor.

It localises to the mitochondrion. The catalysed reaction is N(6)-[(R)-dihydrolipoyl]-L-lysyl-[protein] + NAD(+) = N(6)-[(R)-lipoyl]-L-lysyl-[protein] + NADH + H(+). With respect to regulation, lipoamide reduction and the NADH -&gt; NAD reaction are both completely inhibited by copper and cadmium ions. In terms of biological role, lipoamide dehydrogenase is a component of the glycine cleavage system as well as of the alpha-ketoacid dehydrogenase complexes. This enzyme has lipoamide dehydrogenase activity and NADH -&gt; NAD transhydrogenation activity. Also displays some NADH-ferricyanide reductase and NADPH -&gt; NAD transydrogenation activities. The sequence is that of Dihydrolipoyl dehydrogenase from Hymenolepis diminuta (Rat tapeworm).